Reading from the N-terminus, the 125-residue chain is Large ribosomal subunit protein bL12 (125 aa).

This sequence belongs to the bacterial ribosomal protein bL12 family. As to quaternary structure, homodimer. Part of the ribosomal stalk of the 50S ribosomal subunit. Forms a multimeric L10(L12)X complex, where L10 forms an elongated spine to which 2 to 4 L12 dimers bind in a sequential fashion. Binds GTP-bound translation factors.

Functionally, forms part of the ribosomal stalk which helps the ribosome interact with GTP-bound translation factors. Is thus essential for accurate translation. This chain is Large ribosomal subunit protein bL12, found in Campylobacter jejuni (strain RM1221).